A 509-amino-acid chain; its full sequence is Dihydrolipoyl dehydrogenase, mitochondrial (509 aa).

Residues 1–35 constitute a mitochondrion transit peptide; it reads MQSWSRVYCSLAKRGHFSRISHGLQAVSAVPLRTY. An N6-acetyllysine; alternate modification is found at lysine 66. Position 66 is an N6-succinyllysine; alternate (lysine 66). FAD is bound by residues 71-80 and lysine 89; that span reads EKNETLGGTC. Cysteine 80 and cysteine 85 are oxidised to a cystine. An N6-acetyllysine; alternate mark is found at lysine 104, lysine 122, lysine 132, and lysine 143. Residues lysine 104, lysine 122, lysine 132, and lysine 143 each carry the N6-succinyllysine; alternate modification. Glycine 154 is a binding site for FAD. N6-succinyllysine occurs at positions 159 and 166. FAD is bound at residue 183 to 185; the sequence is TGS. NAD(+) is bound by residues 220 to 227 and glutamate 243; that span reads GAGVIGVE. Residues lysine 273 and lysine 277 each carry the N6-succinyllysine modification. Valine 278 contacts NAD(+). Serine 285 and serine 297 each carry phosphoserine. An NAD(+)-binding site is contributed by glycine 314. Position 346 is an N6-acetyllysine (lysine 346). Residues aspartate 355 and 361–364 each bind FAD; that span reads MLAH. An N6-acetyllysine; alternate modification is found at lysine 410. Lysine 410 is modified (N6-succinyllysine; alternate). N6-acetyllysine occurs at positions 417 and 420. Residue lysine 430 is modified to N6-succinyllysine. Histidine 487 (proton acceptor) is an active-site residue. At serine 502 the chain carries Phosphoserine. Lysine 505 carries the N6-acetyllysine; alternate modification. Position 505 is an N6-succinyllysine; alternate (lysine 505).

The protein belongs to the class-I pyridine nucleotide-disulfide oxidoreductase family. As to quaternary structure, homodimer. Part of the multimeric pyruvate dehydrogenase complex that contains multiple copies of pyruvate dehydrogenase (subunits PDHA (PDHA1 or PDHA2) and PDHB, E1), dihydrolipoamide acetyltransferase (DLAT, E2) and lipoamide dehydrogenase (DLD, E3). These subunits are bound to an inner core composed of about 48 DLAT and 12 PDHX molecules (by non covalent bonds). The 2-oxoglutarate dehydrogenase complex is composed of OGDH (2-oxoglutarate dehydrogenase; E1), DLST (dihydrolipoamide succinyltransferase; E2), DLD (dihydrolipoamide dehydrogenase; E3) and the assembly factor KGD4. It contains multiple copies of the three enzymatic components (E1, E2 and E3). In the nucleus, the 2-oxoglutarate dehydrogenase complex associates with KAT2A. Interacts with PDHX. FAD is required as a cofactor. In terms of processing, tyrosine phosphorylated.

It localises to the mitochondrion matrix. The protein localises to the nucleus. It is found in the cell projection. Its subcellular location is the cilium. The protein resides in the flagellum. It localises to the cytoplasmic vesicle. The protein localises to the secretory vesicle. It is found in the acrosome. The enzyme catalyses N(6)-[(R)-dihydrolipoyl]-L-lysyl-[protein] + NAD(+) = N(6)-[(R)-lipoyl]-L-lysyl-[protein] + NADH + H(+). Functionally, lipoamide dehydrogenase is a component of the glycine cleavage system as well as an E3 component of three alpha-ketoacid dehydrogenase complexes (pyruvate-, alpha-ketoglutarate-, and branched-chain amino acid-dehydrogenase complex). The 2-oxoglutarate dehydrogenase complex is mainly active in the mitochondrion. A fraction of the 2-oxoglutarate dehydrogenase complex also localizes in the nucleus and is required for lysine succinylation of histones: associates with KAT2A on chromatin and provides succinyl-CoA to histone succinyltransferase KAT2A. In monomeric form may have additional moonlighting function as serine protease. Involved in the hyperactivation of spermatazoa during capacitation and in the spermatazoal acrosome reaction. The protein is Dihydrolipoyl dehydrogenase, mitochondrial (DLD) of Canis lupus familiaris (Dog).